The primary structure comprises 85 residues: ATP synthase subunit 9, mitochondrial (85 aa).

2 consecutive transmembrane segments (helical) span residues Ile19–Phe39 and Ile61–Ile81.

The protein belongs to the ATPase C chain family. In terms of assembly, F-type ATPases have 2 components, CF(1) - the catalytic core - and CF(0) - the membrane proton channel. CF(1) has five subunits: alpha(3), beta(3), gamma(1), delta(1), epsilon(1). CF(0) has three main subunits: a, b and c.

The protein localises to the mitochondrion membrane. Its function is as follows. This protein is one of the chains of the nonenzymatic membrane component (F0) of mitochondrial ATPase. This Arabidopsis thaliana (Mouse-ear cress) protein is ATP synthase subunit 9, mitochondrial (ATP9).